The sequence spans 391 residues: UPF0229 protein BAA_0633 (391 aa).

A compositionally biased stretch (polar residues) spans 1–16; it reads MGEENQPNYTISQENW. Disordered regions lie at residues 1 to 31 and 80 to 117; these read MGEE…RHQE and HVGQ…GDAA. Residues 21-31 are compositionally biased toward basic and acidic residues; sequence KGYDDQQRHQE. Over residues 98-115 the composition is skewed to gly residues; sequence GSGGQKQKGPGKGQGAGD.

The protein belongs to the UPF0229 family.

This is UPF0229 protein BAA_0633 from Bacillus anthracis (strain A0248).